The following is an 867-amino-acid chain: Pentatricopeptide repeat-containing protein At2g39230, mitochondrial (867 aa).

The N-terminal 49 residues, 1 to 49 (MTTFMVSKRFRPPIFLHRFINPKPISSQTRFLHPPDNQSRDISDSTTET), are a transit peptide targeting the mitochondrion. The disordered stretch occupies residues 27–74 (SQTRFLHPPDNQSRDISDSTTETISTLEFPHKTSVPNHSPLTSTSETE). The segment covering 60 to 72 (SVPNHSPLTSTSE) has biased composition (polar residues). PPR repeat units lie at residues 168 to 202 (TPRA…KVVP), 203 to 237 (FVPY…GVAG), 238 to 272 (DNVT…GAEP), 273 to 307 (DGLL…LGVP), 309 to 343 (SQET…GIPM), 344 to 378 (SVIA…GLAP), 379 to 413 (DKVM…RIAP), 414 to 444 (SSVL…SFES), 448 to 482 (HGFM…GIEP), 483 to 517 (NVVF…GLEP), 518 to 552 (NNFT…NFEA), 553 to 588 (NEVI…RYSM), 589 to 623 (SCTS…GKSP), 624 to 658 (NVVT…ELKL), 659 to 693 (DLPA…GLMP), 694 to 728 (NVSV…GISC), 729 to 763 (DLFT…GIVP), 764 to 798 (DEIL…DVTP), and 799 to 833 (NVLL…GIVH).

This sequence belongs to the PPR family. P subfamily. As to expression, expressed in lateral organ junctions and shoot apical meristem (SAM).

It localises to the mitochondrion. Its function is as follows. Involved in lateral organ development and boundary demarcation. In Arabidopsis thaliana (Mouse-ear cress), this protein is Pentatricopeptide repeat-containing protein At2g39230, mitochondrial (LOJ).